We begin with the raw amino-acid sequence, 556 residues long: (6-4)DNA photolyase (556 aa).

The Photolyase/cryptochrome alpha/beta domain occupies 24 to 162 (SGSLIWFRKG…EVFSPVSHTL (139 aa)). Glu262 contributes to the phosphate binding site. FAD is bound by residues Lys263, 276–280 (TTVMS), 317–321 (QLLWR), 380–383 (WMHH), Arg386, 415–417 (DSD), and Asn421. Trp320 serves as a coordination point for DNA. The interaction with DNA stretch occupies residues 382–387 (HHLARH). Trp427 contacts DNA. Positions 534-556 (LRRKLQKDEHEESKIRNQRPKLK) are disordered. Positions 539–548 (QKDEHEESKI) are enriched in basic and acidic residues.

Belongs to the DNA photolyase class-1 family. Requires FAD as cofactor. In terms of tissue distribution, expressed in siliques, flowers and leaves. Not detected in roots.

It catalyses the reaction (6-4) photoproduct (in DNA) = 2 pyrimidine residues (in DNA).. Its function is as follows. Involved in repair of UV radiation-induced DNA damage. Catalyzes the photoreactivation of pyrimidine [6-4] pyrimidone photoproduct (6-4 products). Binds specifically to DNA containing 6-4 products and repairs these lesions in a visible light-dependent manner. Not required for repair of cyclobutane pyrimidine dimer (CPD). The protein is (6-4)DNA photolyase (UVR3) of Arabidopsis thaliana (Mouse-ear cress).